A 64-amino-acid polypeptide reads, in one-letter code: Weak toxin CM-9a (64 aa).

Cystine bridges form between Cys3–Cys24, Cys6–Cys11, Cys17–Cys41, Cys45–Cys56, and Cys57–Cys62.

Belongs to the three-finger toxin family. Ancestral subfamily. Orphan group II sub-subfamily. Expressed by the venom gland.

The protein resides in the secreted. Its function is as follows. Binds with low affinity to muscular (alpha-1-beta-1-delta-epsilon/CHRNA1-CHRNB1-CHRND-CHRNE) and very low affinity to neuronal (alpha-7/CHRNA7) nicotinic acetylcholine receptor (nAChR). The polypeptide is Weak toxin CM-9a (Naja kaouthia (Monocled cobra)).